Here is a 260-residue protein sequence, read N- to C-terminus: Cytochrome c oxidase subunit 2 (260 aa).

Topologically, residues 1–43 (MILRSLSCRFLTIALCDAAEPWQLGFQDAATPMMQGIIDLHHD) are mitochondrial intermembrane. A helical transmembrane segment spans residues 44–64 (IFFFLILILVFVLWMLVRALW). The Mitochondrial matrix portion of the chain corresponds to 65–84 (HFNEQTNPIPQRIVHGTTIE). The helical transmembrane segment at 85–105 (IIWTIFPSVILLFIAIPSFAL) threads the bilayer. The Mitochondrial intermembrane portion of the chain corresponds to 106 to 260 (LYSMDGVLVD…VSNQLILQTN (155 aa)). Positions 189, 224, 226, 228, 232, and 235 each coordinate Cu cation. E226 contacts Mg(2+).

It belongs to the cytochrome c oxidase subunit 2 family. In terms of assembly, component of the cytochrome c oxidase (complex IV, CIV), a multisubunit enzyme composed of a catalytic core of 3 subunits and several supernumerary subunits. The complex exists as a monomer or a dimer and forms supercomplexes (SCs) in the inner mitochondrial membrane with ubiquinol-cytochrome c oxidoreductase (cytochrome b-c1 complex, complex III, CIII). It depends on Cu cation as a cofactor.

It localises to the mitochondrion inner membrane. It catalyses the reaction 4 Fe(II)-[cytochrome c] + O2 + 8 H(+)(in) = 4 Fe(III)-[cytochrome c] + 2 H2O + 4 H(+)(out). Functionally, component of the cytochrome c oxidase, the last enzyme in the mitochondrial electron transport chain which drives oxidative phosphorylation. The respiratory chain contains 3 multisubunit complexes succinate dehydrogenase (complex II, CII), ubiquinol-cytochrome c oxidoreductase (cytochrome b-c1 complex, complex III, CIII) and cytochrome c oxidase (complex IV, CIV), that cooperate to transfer electrons derived from NADH and succinate to molecular oxygen, creating an electrochemical gradient over the inner membrane that drives transmembrane transport and the ATP synthase. Cytochrome c oxidase is the component of the respiratory chain that catalyzes the reduction of oxygen to water. Electrons originating from reduced cytochrome c in the intermembrane space (IMS) are transferred via the dinuclear copper A center (CU(A)) of subunit 2 and heme A of subunit 1 to the active site in subunit 1, a binuclear center (BNC) formed by heme A3 and copper B (CU(B)). The BNC reduces molecular oxygen to 2 water molecules using 4 electrons from cytochrome c in the IMS and 4 protons from the mitochondrial matrix. This chain is Cytochrome c oxidase subunit 2 (COX2), found in Triticum aestivum (Wheat).